Reading from the N-terminus, the 620-residue chain is Glutathione-regulated potassium-efflux system protein KefC (620 aa).

12 helical membrane-spanning segments follow: residues 4-24 (HTLL…PIAV), 26-46 (LGLG…PWGL), 54-74 (SILH…GLEL), 90-110 (GALQ…FLGL), 114-134 (VAEL…MQAM), 149-169 (FAVL…IPLL), 178-198 (LGAF…VVLL), 218-238 (VFSA…EEVG), 270-290 (GLLL…GTLV), 294-314 (LRIL…LWLV), 327-347 (WFAV…GAAQ), and 359-379 (ALTL…VLLT). An RCK N-terminal domain is found at 399–518 (QPRVIVAGFG…AGVAMPERET (120 aa)). The segment at 599-620 (QGTAEGKHSGEVADEPEVKPSI) is disordered.

Belongs to the monovalent cation:proton antiporter 2 (CPA2) transporter (TC 2.A.37) family. KefC subfamily. As to quaternary structure, homodimer. Interacts with the regulatory subunit KefF.

It is found in the cell inner membrane. In terms of biological role, pore-forming subunit of a potassium efflux system that confers protection against electrophiles. Catalyzes K(+)/H(+) antiport. In Salmonella agona (strain SL483), this protein is Glutathione-regulated potassium-efflux system protein KefC.